A 737-amino-acid chain; its full sequence is Cilium assembly protein DZIP1L (737 aa).

The interaction with Rab8 stretch occupies residues 1–293; that stretch reads MGFKGKYPQM…LKQSNEQFIQ (293 aa). The stretch at 98 to 132 forms a coiled coil; the sequence is VTDLKEAHTTAQEEIATLRKSLSESNNEVVQLHKR. The segment at 144-167 adopts a C2H2-type zinc-finger fold; sequence YPCHLCTKNFISNEALNVHIGRKH. Disordered regions lie at residues 167–187, 214–267, 415–548, 624–682, and 698–737; these read HRVASPPSLTSATGKEKDRDK, ERNI…KEQL, SEFL…RKDA, KSPL…VSRD, and IRGASKSSLSSRPVPLPRKRVMFNTTEDGKSFNDSDDNLK. 2 stretches are compositionally biased toward basic and acidic residues: residues 244–266 and 415–438; these read EPKEKDEDSGEARQSEASERKEQ and SEFLKQKHDDDTYSIEEAPRKGSE. Positions 457–469 are enriched in polar residues; that stretch reads SAGSSDSNPTYTK. The span at 492–510 shows a compositional bias: acidic residues; that stretch reads SQEETENEEERSLTEEEGT. Residues 665–677 are compositionally biased toward polar residues; it reads SSEQQTRSPSPQR. The span at 724–737 shows a compositional bias: basic and acidic residues; the sequence is EDGKSFNDSDDNLK.

The protein belongs to the DZIP C2H2-type zinc-finger protein family. As to quaternary structure, component of a ciliary transition zone (TZ)-localized complex composed of DZIP1, Fam92 and Cby. Interacts directly with Cby. Interacts with Cep290 (via N-terminus). Interacts (via N-terminus) with Rab8. In neurons of the second and third antennal segments, expressed at the tip of the dendrites.

It is found in the cytoplasm. Its subcellular location is the cytoskeleton. The protein localises to the microtubule organizing center. It localises to the centrosome. The protein resides in the centriole. It is found in the cilium basal body. In terms of biological role, component of the DZIP1-Fam92-Cby complex which promotes ciliogenesis in sensory neurons and spermatocytes by acting downstream of Cep290 to initiate early ciliary membrane formation and thus transition zone (TZ) assembly. During spermatogenesis, also regulates distal elongation of the basal-body and their docking (anchoring) to the plasma membrane and as a consequence, regulates the initiation and proper elongation of axonemal microtubules. Within the complex, required to recruit or stabilize Rab8, Fam92 and Cby at the distal basal body of cilia to promote early ciliary membrane formation and initiate TZ assembly. Also acts with Fam92 to restrict Cep290 localization to the proximal part of the TZ. May also be involved in recruitment or stabilization of Mks1 at the TZ. This is Cilium assembly protein DZIP1L from Drosophila melanogaster (Fruit fly).